A 412-amino-acid chain; its full sequence is MNAEIIAVGTELLLGQIANTNAQFLSEKLASIGINVYYHTVVGDNNKRLQKAIEAAEERADILIFTGGLGPTKDDLTKETIATSLDEELVYDEKALALISNYFKRTGREFTENNKKQALVLNGATVFANDHGMAPGMGVNKNEKVYILLPGPPKEMKPMYVSYVEPFLRNFTTGENIYSRVLRFFGIGESQLEVKVQDLIDGQTNPTIAPLANDGEVTLRLTAKHQNVSEAEKLIQHVEDLILERVGEFFYGYDQEFLHYKAIELLKRKGLTLACAESLTGGLFGNQVTENAGVSSVFKGGVICYHNDVKQHVLRVPEEVLHTDGAVSKECARYLAENVKDVLKADIGISFTGVAGPDASEQKEPGTVFVGLSIKDEPTVVFPLNLSGSRQQIRERTAKYGFYHLYKKLEEI.

Belongs to the CinA family.

The polypeptide is Putative competence-damage inducible protein (Bacillus cereus (strain B4264)).